A 224-amino-acid chain; its full sequence is Heme response regulator HssR (224 aa).

Residues 3-116 (QCLVVDDDSR…ELIFRIRAVL (114 aa)) form the Response regulatory domain. At Asp-52 the chain carries 4-aspartylphosphate. Residues 124–222 (NSEMTIGNLT…VRGQGYKVEN (99 aa)) constitute a DNA-binding region (ompR/PhoB-type).

Post-translationally, phosphorylated by HssS.

Its subcellular location is the cytoplasm. Its function is as follows. Member of the two-component regulatory system HssS/HssR involved in intracellular heme homeostasis and tempering of staphylococcal virulence. Phosphorylated HssR binds to a direct repeat sequence within hrtAB promoter and activates the expression of hrtAB, an efflux pump, in response to extracellular heme, hemin, hemoglobin or blood. This Staphylococcus aureus (strain bovine RF122 / ET3-1) protein is Heme response regulator HssR (hssR).